A 577-amino-acid polypeptide reads, in one-letter code: Autophagy-related protein 20 (577 aa).

Residues 57 to 81 (GQSYVAPHSGGGRTSSGSSSSASLQ) are disordered. Positions 95–239 (GEQGRVRILE…DFLDPNNANW (145 aa)) constitute a PX domain. Positions 131, 133, 157, and 205 each coordinate a 1,2-diacyl-sn-glycero-3-phospho-(1D-myo-inositol-3-phosphate).

This sequence belongs to the sorting nexin family.

The protein resides in the endosome membrane. It is found in the preautophagosomal structure membrane. Required for cytoplasm to vacuole transport (Cvt), pexophagy and mitophagy. Also involved in endoplasmic reticulum-specific autophagic process and is essential for the survival of cells subjected to severe ER stress. Functions in protein retrieval from the endocytic pathway. In Eremothecium gossypii (strain ATCC 10895 / CBS 109.51 / FGSC 9923 / NRRL Y-1056) (Yeast), this protein is Autophagy-related protein 20 (ATG20).